Here is a 306-residue protein sequence, read N- to C-terminus: MNQYKNFIMQFEDIVGNNNVLIDEPMKKHTSFKVGGPADLLITPTTLEQVKDSIILCRNNSIPYYIIGNGSNLLVRDGGIRGVVIKFLKLGDIKVEVDRVIAQSGAPLTNICNEALKSNLGGLEFACGIPGSVGGAVTMNAGAYNGEISQVIESAKVIDKDGNVFLLNKEQLDLGYRMSAIQKYHYIVLEVTFKLHNSEYDTIKNRIMDLNRRRTEKQPLEYPSAGSTFKRPEGHFAAKLIEDTGLKGKSIGGAQVSEKHSGFIINKGGATAGDILNLIEFVQNKVKEKFQVDLHTEVRIIGEENN.

The 165-residue stretch at 34–198 (VGGPADLLIT…LEVTFKLHNS (165 aa)) folds into the FAD-binding PCMH-type domain. R177 is an active-site residue. S227 serves as the catalytic Proton donor. The active site involves E297.

The protein belongs to the MurB family. Requires FAD as cofactor.

Its subcellular location is the cytoplasm. The catalysed reaction is UDP-N-acetyl-alpha-D-muramate + NADP(+) = UDP-N-acetyl-3-O-(1-carboxyvinyl)-alpha-D-glucosamine + NADPH + H(+). Its pathway is cell wall biogenesis; peptidoglycan biosynthesis. Cell wall formation. This is UDP-N-acetylenolpyruvoylglucosamine reductase from Clostridium botulinum (strain 657 / Type Ba4).